The sequence spans 183 residues: Large ribosomal subunit protein uL13m (183 aa).

The protein belongs to the universal ribosomal protein uL13 family. In terms of assembly, component of the mitochondrial large ribosomal subunit (mt-LSU). Mature N.crassa 74S mitochondrial ribosomes consist of a small (37S) and a large (54S) subunit. The 37S small subunit contains a 16S ribosomal RNA (16S mt-rRNA) and 32 different proteins. The 54S large subunit contains a 23S rRNA (23S mt-rRNA) and 42 different proteins.

It localises to the mitochondrion. Component of the mitochondrial ribosome (mitoribosome), a dedicated translation machinery responsible for the synthesis of mitochondrial genome-encoded proteins, including at least some of the essential transmembrane subunits of the mitochondrial respiratory chain. The mitoribosomes are attached to the mitochondrial inner membrane and translation products are cotranslationally integrated into the membrane. The protein is Large ribosomal subunit protein uL13m (mrpl23) of Neurospora crassa (strain ATCC 24698 / 74-OR23-1A / CBS 708.71 / DSM 1257 / FGSC 987).